Reading from the N-terminus, the 310-residue chain is ADP-L-glycero-D-manno-heptose-6-epimerase (310 aa).

NADP(+) contacts are provided by residues 10–11, 31–32, lysine 38, lysine 53, 75–79, and asparagine 92; these read FI, DN, and EGACS. Tyrosine 140 functions as the Proton acceptor in the catalytic mechanism. Lysine 144 lines the NADP(+) pocket. A substrate-binding site is contributed by asparagine 169. Residues valine 170 and lysine 178 each coordinate NADP(+). The active-site Proton acceptor is lysine 178. Substrate contacts are provided by residues serine 180, histidine 187, 201-204, arginine 209, and tyrosine 272; that span reads FEGS.

This sequence belongs to the NAD(P)-dependent epimerase/dehydratase family. HldD subfamily. As to quaternary structure, homopentamer. NADP(+) serves as cofactor.

It carries out the reaction ADP-D-glycero-beta-D-manno-heptose = ADP-L-glycero-beta-D-manno-heptose. Its pathway is nucleotide-sugar biosynthesis; ADP-L-glycero-beta-D-manno-heptose biosynthesis; ADP-L-glycero-beta-D-manno-heptose from D-glycero-beta-D-manno-heptose 7-phosphate: step 4/4. In terms of biological role, catalyzes the interconversion between ADP-D-glycero-beta-D-manno-heptose and ADP-L-glycero-beta-D-manno-heptose via an epimerization at carbon 6 of the heptose. This chain is ADP-L-glycero-D-manno-heptose-6-epimerase, found in Salmonella heidelberg (strain SL476).